Consider the following 387-residue polypeptide: Protoheme IX farnesyltransferase, mitochondrial (387 aa).

A run of 8 helical transmembrane segments spans residues 95–115 (LTVL…YPGL), 117–137 (FNTL…ANAF), 183–203 (FLVN…YMGI), 212–232 (IVNT…GWAA), 242–262 (PGGL…FNAF), 284–306 (ALNA…AYIS), 311–330 (GPWY…ARAW), and 345–365 (FFAS…CHMI).

This sequence belongs to the UbiA prenyltransferase family.

The protein localises to the mitochondrion membrane. The catalysed reaction is heme b + (2E,6E)-farnesyl diphosphate + H2O = Fe(II)-heme o + diphosphate. In terms of biological role, converts protoheme IX and farnesyl diphosphate to heme O. This chain is Protoheme IX farnesyltransferase, mitochondrial (cox10), found in Schizosaccharomyces pombe (strain 972 / ATCC 24843) (Fission yeast).